A 192-amino-acid chain; its full sequence is Phosphoheptose isomerase (192 aa).

The region spanning 37–192 is the SIS domain; sequence LADSFKQEGK…IQLVEKEMAK (156 aa). 52–54 contributes to the substrate binding site; it reads NGG. Residues His-61 and Glu-65 each coordinate Zn(2+). Substrate is bound by residues Glu-65, 93-94, 119-121, Ser-124, and Gln-172; these read ND and STS. Zn(2+) contacts are provided by Gln-172 and His-180.

The protein belongs to the SIS family. GmhA subfamily. As to quaternary structure, homotetramer. Requires Zn(2+) as cofactor.

The protein resides in the cytoplasm. The enzyme catalyses 2 D-sedoheptulose 7-phosphate = D-glycero-alpha-D-manno-heptose 7-phosphate + D-glycero-beta-D-manno-heptose 7-phosphate. The protein operates within carbohydrate biosynthesis; D-glycero-D-manno-heptose 7-phosphate biosynthesis; D-glycero-alpha-D-manno-heptose 7-phosphate and D-glycero-beta-D-manno-heptose 7-phosphate from sedoheptulose 7-phosphate: step 1/1. In terms of biological role, catalyzes the isomerization of sedoheptulose 7-phosphate in D-glycero-D-manno-heptose 7-phosphate. The polypeptide is Phosphoheptose isomerase (Aeromonas salmonicida (strain A449)).